The sequence spans 151 residues: uncharacterized protein (151 aa).

This is an uncharacterized protein from Acanthamoeba polyphaga mimivirus (APMV).